Consider the following 386-residue polypeptide: Meiotic chromosome segregation protein C1539.02 (386 aa).

3 disordered regions span residues 1-28 (MNQDDFRKLLATPKAETSQLKNFSSNKS), 46-85 (RALIKRKQLSHSTSSDITRHSNAKNSGKDTQFYEEPSSKQ), and 366-386 (DIHELGESDDDDNVKRRKTKG). Positions 15–28 (AETSQLKNFSSNKS) are enriched in polar residues.

It is found in the nucleus. Required for meiotic chromosome segregation. This Schizosaccharomyces pombe (strain 972 / ATCC 24843) (Fission yeast) protein is Meiotic chromosome segregation protein C1539.02.